A 1137-amino-acid chain; its full sequence is DNA-directed RNA polymerase III subunit RPC2 (1137 aa).

A C4-type zinc finger spans residues 1084–1099 (DVCRTCGRMAYCSWCH). Zn(2+)-binding residues include Cys1086, Cys1089, Cys1098, and Cys1101.

This sequence belongs to the RNA polymerase beta chain family. In terms of assembly, component of the RNA polymerase III (Pol III) complex consisting of 17 subunits.

It is found in the nucleus. It carries out the reaction RNA(n) + a ribonucleoside 5'-triphosphate = RNA(n+1) + diphosphate. DNA-dependent RNA polymerase catalyzes the transcription of DNA into RNA using the four ribonucleoside triphosphates as substrates. Second largest core component of RNA polymerase III which synthesizes small RNAs, such as 5S rRNA and tRNAs. Proposed to contribute to the polymerase catalytic activity and forms the polymerase active center together with the largest subunit. Pol III is composed of mobile elements and Polr3B is part of the core element with the central large cleft and probably a clamp element that moves to open and close the cleft. The sequence is that of DNA-directed RNA polymerase III subunit RPC2 from Drosophila melanogaster (Fruit fly).